The chain runs to 798 residues: Bromodomain-containing protein 2 (798 aa).

Residue methionine 1 is modified to N-acetylmethionine. The interval 1-21 is disordered; the sequence is MLQNVTPHKLPGEGNAGLLGL. Threonine 6 carries the phosphothreonine modification. A Phosphoserine modification is found at serine 36. Residues 53–72 are disordered; sequence LQLAPANPPPPEVSNPKKPG. The 107-residue stretch at 73–179 folds into the Bromo 1 domain; it reads RVTNQLQYLH…KIFLQKVASM (107 aa). Residues aspartate 111, tyrosine 154, asparagine 155, lysine 156, aspartate 159, and aspartate 160 each contribute to the a protein site. 3 disordered regions span residues 267 to 348, 454 to 645, and 736 to 798; these read PPAQ…LSEQ, DEPL…YDEK, and KRLQ…SDSG. A compositionally biased stretch (low complexity) spans 284–297; it reads TTTPTPTAILAPGS. Serine 297, serine 300, and serine 304 each carry phosphoserine. Residues 315-331 show a composition bias toward basic and acidic residues; it reads MRRESGRPIKPPRKDLP. The region spanning 343–452 is the Bromo 2 domain; it reads GKLSEQLKHC…DVFEFRYAKM (110 aa). The segment covering 480-512 has biased composition (acidic residues); it reads SSEESSSESSSEEEEEEEEDEDEEESESSDSEE. Residues 542 to 564 show a composition bias toward basic residues; the sequence is KPKRKREKKEKKKKRKAEKHRGR. The Nuclear localization signal motif lies at 553-557; that stretch reads KKKRK. The region spanning 630 to 712 is the NET domain; sequence DSEEEEESRP…SCLRKKPRKP (83 aa). Serine 631 carries the phosphoserine modification. Positions 772–792 are enriched in low complexity; that stretch reads SASSSSSDSSSSSSSSSSSDT.

It belongs to the BET family. In terms of assembly, homodimer. Interacts with E2F1. Interacts with (acetylated) STAT3; promoting STAT3 recruitment to chromatin. Interacts with CTCF; promoting BRD2 recruitment to chromatin. In terms of tissue distribution, predominantly expressed in the testis, followed by ovary, placenta, embryo and to a lower extent in somatic tissues.

Its subcellular location is the nucleus. It localises to the chromosome. Its function is as follows. Chromatin reader protein that specifically recognizes and binds histone H4 acetylated at 'Lys-5' and 'Lys-12' (H4K5ac and H4K12ac, respectively), thereby controlling gene expression and remodeling chromatin structures. Recruits transcription factors and coactivators to target gene sites, and activates RNA polymerase II machinery for transcriptional elongation. Plays a key role in genome compartmentalization via its association with CTCF and cohesin: recruited to chromatin by CTCF and promotes formation of topologically associating domains (TADs) via its ability to bind acetylated histones, contributing to CTCF boundary formation and enhancer insulation. Also recognizes and binds acetylated non-histone proteins, such as STAT3. Involved in inflammatory response by regulating differentiation of naive CD4(+) T-cells into T-helper Th17: recognizes and binds STAT3 acetylated at 'Lys-87', promoting STAT3 recruitment to chromatin. In addition to acetylated lysines, also recognizes and binds lysine residues on histones that are both methylated and acetylated on the same side chain to form N6-acetyl-N6-methyllysine (Kacme), an epigenetic mark of active chromatin associated with increased transcriptional initiation. Specifically binds histone H4 acetyl-methylated at 'Lys-5' and 'Lys-12' (H4K5acme and H4K12acme, respectively). The polypeptide is Bromodomain-containing protein 2 (Mus musculus (Mouse)).